The following is a 793-amino-acid chain: Probable serine/threonine-protein kinase fnkA (793 aa).

Residues Trp-11–Ile-358 form the Protein kinase domain. Residues Leu-17 to Val-25 and Lys-46 each bind ATP. The Proton acceptor role is filled by Asp-138. FNIP repeat units follow at residues Phe-403–Arg-444, Tyr-470–Asp-514, Tyr-515–Arg-557, Phe-558–Cys-601, and Phe-691–Arg-733.

The protein belongs to the protein kinase superfamily. STE Ser/Thr protein kinase family. Mg(2+) is required as a cofactor.

It carries out the reaction L-seryl-[protein] + ATP = O-phospho-L-seryl-[protein] + ADP + H(+). It catalyses the reaction L-threonyl-[protein] + ATP = O-phospho-L-threonyl-[protein] + ADP + H(+). This is Probable serine/threonine-protein kinase fnkA from Dictyostelium discoideum (Social amoeba).